The primary structure comprises 206 residues: LexA repressor (206 aa).

The H-T-H motif DNA-binding region spans 28 to 48; the sequence is RAEIATRLGFKSANAAEEHLK. Catalysis depends on for autocatalytic cleavage activity residues serine 123 and lysine 160.

This sequence belongs to the peptidase S24 family. Homodimer.

It catalyses the reaction Hydrolysis of Ala-|-Gly bond in repressor LexA.. Functionally, represses a number of genes involved in the response to DNA damage (SOS response), including recA and lexA. In the presence of single-stranded DNA, RecA interacts with LexA causing an autocatalytic cleavage which disrupts the DNA-binding part of LexA, leading to derepression of the SOS regulon and eventually DNA repair. This Shewanella baltica (strain OS223) protein is LexA repressor.